A 302-amino-acid polypeptide reads, in one-letter code: MRLVFAGTPAVAVPSLTALAARFEVAAVITREDAPLGRKRILTPSPVAIAAEELGLSVIRANRLREEAIERVRVLRPDVGVVVAYGGLVHEPLLSLPRRGWVNLHFSLLPRWRGAAPVQHALIAGDRETGAAVFQLVPELDAGDVFGELRRLIRPDETAGELLDDLARSGARLLADTVAALADGTAVATPQSGEPVAAPKLGIADAKLDLTRPADEVYARFRGVTPEPGAWALLDGERFKIHAVRPTAAGVLPPGAVVADGKRILAGTGSRPLELVTVQPAGKRVMAAADWWRGAGGEAVLS.

Ser107–Pro110 is a binding site for (6S)-5,6,7,8-tetrahydrofolate.

The protein belongs to the Fmt family.

It carries out the reaction L-methionyl-tRNA(fMet) + (6R)-10-formyltetrahydrofolate = N-formyl-L-methionyl-tRNA(fMet) + (6S)-5,6,7,8-tetrahydrofolate + H(+). In terms of biological role, attaches a formyl group to the free amino group of methionyl-tRNA(fMet). The formyl group appears to play a dual role in the initiator identity of N-formylmethionyl-tRNA by promoting its recognition by IF2 and preventing the misappropriation of this tRNA by the elongation apparatus. In Leifsonia xyli subsp. xyli (strain CTCB07), this protein is Methionyl-tRNA formyltransferase.